A 270-amino-acid chain; its full sequence is ES1 protein, mitochondrial (270 aa).

In terms of tissue distribution, expressed specifically in the inner segments of cone photoreceptor cells of the retina (at protein level).

It localises to the mitochondrion. Functionally, plays a role in promoting mitochondrial enlargement in cone photoreceptor cells in a fusion-independent and ATP-dependent manner. The sequence is that of ES1 protein, mitochondrial from Danio rerio (Zebrafish).